A 319-amino-acid polypeptide reads, in one-letter code: Histidinol-phosphate aminotransferase 1 (319 aa).

Residue lysine 182 is modified to N6-(pyridoxal phosphate)lysine.

The protein belongs to the class-II pyridoxal-phosphate-dependent aminotransferase family. Histidinol-phosphate aminotransferase subfamily. It depends on pyridoxal 5'-phosphate as a cofactor.

The catalysed reaction is L-histidinol phosphate + 2-oxoglutarate = 3-(imidazol-4-yl)-2-oxopropyl phosphate + L-glutamate. Its pathway is amino-acid biosynthesis; L-histidine biosynthesis; L-histidine from 5-phospho-alpha-D-ribose 1-diphosphate: step 7/9. The protein is Histidinol-phosphate aminotransferase 1 (hisC1) of Archaeoglobus fulgidus (strain ATCC 49558 / DSM 4304 / JCM 9628 / NBRC 100126 / VC-16).